Here is a 245-residue protein sequence, read N- to C-terminus: MYRVFEALDELGAIVEEARGVPMTAGCVVPRGDVLELIDDIKDAIPGELDDAQDVLDARDAMLNDAKAHADSMVSSATTESESLLSHARAEADRILSDAKSQVDRMASEARQHSERMLGDAREESIRIATVAKREYEASLNRAQSECDRLIENGNISYEKAIQEGIKEQQRLVSQNEVVQAANAESTRLIDTAHAEADRLRGECDIYVDNKLAEFEEFLNGTLRSVGRGRHQLRTAAGTHDYVTR.

It to M.tuberculosis Rv2927c.

This is an uncharacterized protein from Mycobacterium leprae (strain TN).